The chain runs to 709 residues: Nucleobase-ascorbate transporter 12 (709 aa).

Residues Met1–Gly145 form a disordered region. Over residues Lys7–Pro19 the composition is skewed to pro residues. At Ser40 the chain carries Phosphoserine. The span at Gly41–Leu53 shows a compositional bias: polar residues. 2 stretches are compositionally biased toward basic and acidic residues: residues Glu89–Pro98 and Gln113–Asp122. 12 helical membrane passes run Tyr190–Gly210, Val218–Ser238, Leu240–Ser260, Ile283–Leu303, Pro308–Pro328, Leu329–Leu349, Ile361–Leu381, Trp438–Ala458, Gly530–Ile550, Pro551–Leu571, Ile585–Tyr605, and Tyr639–Leu659.

This sequence belongs to the nucleobase:cation symporter-2 (NCS2) (TC 2.A.40) family. As to expression, ubiquitous.

Its subcellular location is the cell membrane. This is Nucleobase-ascorbate transporter 12 (NAT12) from Arabidopsis thaliana (Mouse-ear cress).